The chain runs to 337 residues: MKKLLKISAISAALLSAPMMANADVLASVKPLGFIVSSIADGVTGTQVLVPAGASPHDYNLKLSDIQKVKSADLVVWIGEDIDSFLDKPISQIERKKVITIADLADVKPLLSKAHHEHFHEDGDHDHDHKHEHKHDHKHDHDHDHDHKHEHKHDHEHHDHDHHEGLTTNWHVWYSPAISKIVAQKVADKLTAQFPDKKALIAQNLSDFNRTLAEQSEKITAQLANVKDKGFYVFHDAYGYFNDAYGLKQTGYFTINPLVAPGAKTLAHIKEEIDEHKVNCLFAEPQFTPKVIESLAKNTKVNVGQLDPIGDKVTLGKNSYATFLQSTADSYMECLAK.

A signal peptide spans 1-23 (MKKLLKISAISAALLSAPMMANA). His57 contacts Zn(2+). Over residues 119–129 (FHEDGDHDHDH) the composition is skewed to basic and acidic residues. The segment at 119 to 163 (FHEDGDHDHDHKHEHKHDHKHDHDHDHDHKHEHKHDHEHHDHDHH) is disordered. The Zn(2+) site is built by His171, His235, and Asp307. A disulfide bridge links Cys280 with Cys334.

The protein belongs to the bacterial solute-binding protein 9 family.

It localises to the periplasm. In terms of biological role, part of the ATP-binding cassette (ABC) transport system ZnuABC involved in zinc import. Binds zinc with high affinity and specificity and delivers it to the membrane permease for translocation into the cytoplasm. This is High-affinity zinc uptake system protein ZnuA (znuA) from Haemophilus influenzae (strain ATCC 51907 / DSM 11121 / KW20 / Rd).